A 293-amino-acid polypeptide reads, in one-letter code: Transcription elongation factor S-II (293 aa).

Residues 4 to 81 form the TFIIS N-terminal domain; it reads ADIRSAKAAL…KKWKADVSKG (78 aa). The tract at residues 81 to 123 is disordered; sequence GRPLKTTTTTSSTPSKHADVGSQAQKQVQKQSSSGQRTFKSDN. The span at 100-116 shows a compositional bias: low complexity; sequence VGSQAQKQVQKQSSSGQ. In terms of domain architecture, TFIIS central spans 133–248; sequence IRNNCIGLMY…HAQGAKPQKA (116 aa). The TFIIS-type zinc-finger motif lies at 251–291; that stretch reads DLFTCGKCKQKKVSYYQMQTRSADEPMTTFCECTVCGNRWK. Residues C255, C258, C283, and C286 each contribute to the Zn(2+) site.

The protein belongs to the TFS-II family.

It localises to the nucleus. In terms of biological role, necessary for efficient RNA polymerase II transcription elongation past template-encoded arresting sites. The arresting sites in DNA have the property of trapping a certain fraction of elongating RNA polymerases that pass through, resulting in locked ternary complexes. Cleavage of the nascent transcript by S-II allows the resumption of elongation from the new 3'-terminus. This chain is Transcription elongation factor S-II (tfs1), found in Schizosaccharomyces pombe (strain 972 / ATCC 24843) (Fission yeast).